We begin with the raw amino-acid sequence, 442 residues long: ORC1-type DNA replication protein 8 (442 aa).

ATP is bound by residues 66–70 (VGKTA) and Tyr218.

The protein belongs to the CDC6/cdc18 family.

Functionally, involved in regulation of DNA replication. This chain is ORC1-type DNA replication protein 8 (cdc6h), found in Haloarcula marismortui (strain ATCC 43049 / DSM 3752 / JCM 8966 / VKM B-1809) (Halobacterium marismortui).